Consider the following 339-residue polypeptide: Uroporphyrinogen decarboxylase (339 aa).

Residues 21 to 25 (RQAGR), F40, D71, Y147, S202, and H315 contribute to the substrate site.

The protein belongs to the uroporphyrinogen decarboxylase family. In terms of assembly, homodimer.

The protein resides in the cytoplasm. It carries out the reaction uroporphyrinogen III + 4 H(+) = coproporphyrinogen III + 4 CO2. It participates in porphyrin-containing compound metabolism; protoporphyrin-IX biosynthesis; coproporphyrinogen-III from 5-aminolevulinate: step 4/4. Functionally, catalyzes the decarboxylation of four acetate groups of uroporphyrinogen-III to yield coproporphyrinogen-III. In Helicobacter pylori (strain ATCC 700392 / 26695) (Campylobacter pylori), this protein is Uroporphyrinogen decarboxylase.